A 338-amino-acid chain; its full sequence is Holliday junction branch migration complex subunit RuvB (338 aa).

Positions 1–182 (MDDRMVDQSQ…FGVHLRLEYY (182 aa)) are large ATPase domain (RuvB-L). Residues L21, R22, G63, K66, T67, T68, 129–131 (EDF), R172, Y182, and R219 contribute to the ATP site. T67 provides a ligand contact to Mg(2+). The tract at residues 183 to 253 (KESELKDIII…TTKRALQLLQ (71 aa)) is small ATPAse domain (RuvB-S). The head domain (RuvB-H) stretch occupies residues 256 to 338 (DYGLDYIDHK…KNGKRDNFEY (83 aa)). DNA contacts are provided by R292, R311, and R316.

The protein belongs to the RuvB family. Homohexamer. Forms an RuvA(8)-RuvB(12)-Holliday junction (HJ) complex. HJ DNA is sandwiched between 2 RuvA tetramers; dsDNA enters through RuvA and exits via RuvB. An RuvB hexamer assembles on each DNA strand where it exits the tetramer. Each RuvB hexamer is contacted by two RuvA subunits (via domain III) on 2 adjacent RuvB subunits; this complex drives branch migration. In the full resolvosome a probable DNA-RuvA(4)-RuvB(12)-RuvC(2) complex forms which resolves the HJ.

It is found in the cytoplasm. It catalyses the reaction ATP + H2O = ADP + phosphate + H(+). Its function is as follows. The RuvA-RuvB-RuvC complex processes Holliday junction (HJ) DNA during genetic recombination and DNA repair, while the RuvA-RuvB complex plays an important role in the rescue of blocked DNA replication forks via replication fork reversal (RFR). RuvA specifically binds to HJ cruciform DNA, conferring on it an open structure. The RuvB hexamer acts as an ATP-dependent pump, pulling dsDNA into and through the RuvAB complex. RuvB forms 2 homohexamers on either side of HJ DNA bound by 1 or 2 RuvA tetramers; 4 subunits per hexamer contact DNA at a time. Coordinated motions by a converter formed by DNA-disengaged RuvB subunits stimulates ATP hydrolysis and nucleotide exchange. Immobilization of the converter enables RuvB to convert the ATP-contained energy into a lever motion, pulling 2 nucleotides of DNA out of the RuvA tetramer per ATP hydrolyzed, thus driving DNA branch migration. The RuvB motors rotate together with the DNA substrate, which together with the progressing nucleotide cycle form the mechanistic basis for DNA recombination by continuous HJ branch migration. Branch migration allows RuvC to scan DNA until it finds its consensus sequence, where it cleaves and resolves cruciform DNA. This chain is Holliday junction branch migration complex subunit RuvB, found in Staphylococcus carnosus (strain TM300).